Reading from the N-terminus, the 496-residue chain is Signal recognition particle subunit SRP54 1 (496 aa).

The segment at 1-296 (MVLAQLGGSI…DVKPFVSRLL (296 aa)) is G-domain. Residues 108 to 115 (GLQGSGKT), 191 to 195 (DTSGR), and 249 to 252 (TKMD) contribute to the GTP site. The M-domain stretch occupies residues 297 to 496 (GMGDLSGLVN…MGMFGGGGGE (200 aa)).

The protein belongs to the GTP-binding SRP family. SRP54 subfamily. Component of a signal recognition particle (SRP) complex that consists of a 7SL RNA molecule of 300 nucleotides and six protein subunits: SRP72, SRP68, SRP54, SRP19, SRP14 and SRP9.

The protein resides in the cytoplasm. It is found in the endoplasmic reticulum. The enzyme catalyses GTP + H2O = GDP + phosphate + H(+). Component of the signal recognition particle (SRP) complex, a ribonucleoprotein complex that mediates the cotranslational targeting of secretory and membrane proteins to the endoplasmic reticulum (ER). As part of the SRP complex, associates with the SRP receptor (SR) component SRPRA to target secretory proteins to the endoplasmic reticulum membrane. Binds to the signal sequence of presecretory proteins when they emerge from the ribosomes. Displays basal GTPase activity, and stimulates reciprocal GTPase activation of the SR subunit SRPRA. Forms a guanosine 5'-triphosphate (GTP)-dependent complex with the SR subunit SRPRA. SR compaction and GTPase mediated rearrangement of SR drive SRP-mediated cotranslational protein translocation into the ER. Requires the presence of SRP9/SRP14 and/or SRP19 to stably interact with RNA. This is Signal recognition particle subunit SRP54 1 from Solanum lycopersicum (Tomato).